A 164-amino-acid chain; its full sequence is UPF0114 protein Spro_2386 (164 aa).

3 helical membrane-spanning segments follow: residues 15 to 35 (LLAP…IKFF), 53 to 73 (LVLT…LVMV), and 136 to 156 (LMWY…MGYL).

It belongs to the UPF0114 family.

The protein resides in the cell membrane. This chain is UPF0114 protein Spro_2386, found in Serratia proteamaculans (strain 568).